A 587-amino-acid chain; its full sequence is Arginine--tRNA ligase (587 aa).

Residues 127 to 137 carry the 'HIGH' region motif; it reads ANPTGPLHVGH.

It belongs to the class-I aminoacyl-tRNA synthetase family. In terms of assembly, monomer.

It localises to the cytoplasm. It carries out the reaction tRNA(Arg) + L-arginine + ATP = L-arginyl-tRNA(Arg) + AMP + diphosphate. The protein is Arginine--tRNA ligase of Dechloromonas aromatica (strain RCB).